We begin with the raw amino-acid sequence, 311 residues long: Progestin and adipoQ receptor family member 3 (311 aa).

The interval 1–20 is required for interaction with SREBF2; that stretch reads MHQKLLKSAHYIELGSYQYW. At 1-73 the chain is on the cytoplasmic side; that stretch reads MHQKLLKSAH…FILSNETVNI (73 aa). Residues 41–60 are required for interaction with SCAP; it reads KDNPYITDGYRAYLPSRLCI. The tract at residues 61–71 is golgi targeting; it reads KSLFILSNETV. Residues 74–96 traverse the membrane as a helical segment; the sequence is WSHLLGFFLFFTLGIYDMTSVLP. The Lumenal portion of the chain corresponds to 97 to 105; it reads SASASREDF. Residues 106–128 form a helical membrane-spanning segment; sequence VICSICLFCFQVCMLCSVGYHLF. The Cytoplasmic segment spans residues 129–140; it reads SCHRSEKTCRRW. A helical transmembrane segment spans residues 141–163; that stretch reads MALDYAGISIGILGCYVSGVFYA. The Lumenal segment spans residues 164-172; that stretch reads FYCNNYWRQ. A helical transmembrane segment spans residues 173-195; sequence VYLITVLAMILAVFFAQIHPNYL. Residues 196 to 201 lie on the Cytoplasmic side of the membrane; that stretch reads TQQWQR. Residues 202–224 traverse the membrane as a helical segment; sequence LRSIIFCSVSGYGVIPTLHWVWL. Over 225–238 the chain is Lumenal; the sequence is NGGIGAPIVQDFAP. Residues 239–256 traverse the membrane as a helical segment; sequence RVIVMYMIALLAFLFYIS. The Cytoplasmic portion of the chain corresponds to 257-275; it reads KVPERYFPGQLNYLGSSHQ. The chain crosses the membrane as a helical span at residues 276–298; the sequence is IWHILAVVMLYWWHQSTVYVMQY. The segment at 299-303 is golgi targeting; it reads RHSKP. Topologically, residues 299–311 are lumenal; the sequence is RHSKPCPDYVSHL.

It belongs to the ADIPOR family. In terms of assembly, interacts with SCAP and SREBF2; the interactions are direct, increase in low cholesterol conditions and tether SCAP:SREBP complex to the Golgi apparatus. Interaction with SCAP is mutually exclusive with INSIG1. In hepatocytes, interacts with PPARA and HUWE1; the interactions promote PPARA poylubiquitination and HUWE1-mediated degradation. In macrophages, interacts with PPARG and STUB1; the interactions promote PPARG poylubiquitination and STUB1-mediated degradation. In terms of tissue distribution, widely expressed in a range of tissues.

The protein localises to the golgi apparatus membrane. In terms of biological role, golgi-scaffold protein which modulates its interactors acitivies by anchoring them to the Golgi apparatus. Functions as a spatial regulator of RAF1 kinase by sequestrating it to the Golgi apparatus. Acts as a positive regulator of cholesterol biosynthesis by mediating the anchoring of the SCAP:SREBP complex in the Golgi apparatus, thereby promoting SCAP:SREBF2 complex formation, potentiating SREBF2 and SREBF1 processing and enhancing lipid synthesis. Also regulates PPARA and PPARG functions by mediating their interaction with E3 ubiquitin ligases, such as STUB1 or HUWE1, leading to their polyubiquitination and proteasome-mediated degradation. This Homo sapiens (Human) protein is Progestin and adipoQ receptor family member 3.